Reading from the N-terminus, the 496-residue chain is Bifunctional protein HldE (496 aa).

The ribokinase stretch occupies residues 1–335 (MIKHNPPSPE…GALFRSHGPT (335 aa)). 211-214 (NRKE) serves as a coordination point for ATP. Asp-280 is an active-site residue. The segment at 363-496 (FTNGCFDILH…IGKLRAGSTS (134 aa)) is cytidylyltransferase.

This sequence in the N-terminal section; belongs to the carbohydrate kinase PfkB family. It in the C-terminal section; belongs to the cytidylyltransferase family. Homodimer.

It catalyses the reaction D-glycero-beta-D-manno-heptose 7-phosphate + ATP = D-glycero-beta-D-manno-heptose 1,7-bisphosphate + ADP + H(+). The enzyme catalyses D-glycero-beta-D-manno-heptose 1-phosphate + ATP + H(+) = ADP-D-glycero-beta-D-manno-heptose + diphosphate. Its pathway is nucleotide-sugar biosynthesis; ADP-L-glycero-beta-D-manno-heptose biosynthesis; ADP-L-glycero-beta-D-manno-heptose from D-glycero-beta-D-manno-heptose 7-phosphate: step 1/4. The protein operates within nucleotide-sugar biosynthesis; ADP-L-glycero-beta-D-manno-heptose biosynthesis; ADP-L-glycero-beta-D-manno-heptose from D-glycero-beta-D-manno-heptose 7-phosphate: step 3/4. Functionally, catalyzes the phosphorylation of D-glycero-D-manno-heptose 7-phosphate at the C-1 position to selectively form D-glycero-beta-D-manno-heptose-1,7-bisphosphate. Its function is as follows. Catalyzes the ADP transfer from ATP to D-glycero-beta-D-manno-heptose 1-phosphate, yielding ADP-D-glycero-beta-D-manno-heptose. The polypeptide is Bifunctional protein HldE (Mesorhizobium japonicum (strain LMG 29417 / CECT 9101 / MAFF 303099) (Mesorhizobium loti (strain MAFF 303099))).